Reading from the N-terminus, the 137-residue chain is Phospholipase A2 group V (137 aa).

The signal sequence occupies residues 1–20 (MKGLLTLAWFLACSVPAVPG). 6 cysteine pairs are disulfide-bonded: Cys46-Cys137, Cys48-Cys64, Cys63-Cys117, Cys70-Cys110, Cys79-Cys103, and Cys97-Cys108. Residues Tyr47, Gly49, and Gly51 each contribute to the Ca(2+) site. His67 is an active-site residue. Asp68 lines the Ca(2+) pocket. Asp111 is an active-site residue.

Belongs to the phospholipase A2 family. Ca(2+) is required as a cofactor. Post-translationally, this enzyme lacks one of the seven disulfide bonds found in similar PA2 proteins. Expressed in peritoneal macrophages (at protein level). Expressed in heart, skeletal muscle and white adipose tissue.

It localises to the secreted. The protein localises to the cell membrane. Its subcellular location is the cytoplasmic vesicle. The protein resides in the phagosome. It is found in the recycling endosome. It localises to the golgi apparatus. The protein localises to the cis-Golgi network. Its subcellular location is the trans-Golgi network. It catalyses the reaction a 1,2-diacyl-sn-glycero-3-phosphocholine + H2O = a 1-acyl-sn-glycero-3-phosphocholine + a fatty acid + H(+). The enzyme catalyses 1-hexadecanoyl-2-(9Z-octadecenoyl)-sn-glycero-3-phosphocholine + H2O = 1-hexadecanoyl-sn-glycero-3-phosphocholine + (9Z)-octadecenoate + H(+). It carries out the reaction 1-hexadecanoyl-2-(5Z,8Z,11Z,14Z-eicosatetraenoyl)-sn-glycero-3-phosphocholine + H2O = 1-hexadecanoyl-sn-glycero-3-phosphocholine + (5Z,8Z,11Z,14Z)-eicosatetraenoate + H(+). The catalysed reaction is 1-hexadecanoyl-2-(9Z,12Z-octadecadienoyl)-sn-glycero-3-phosphoethanolamine + H2O = 1-hexadecanoyl-sn-glycero-3-phosphoethanolamine + (9Z,12Z)-octadecadienoate + H(+). It catalyses the reaction 1-hexadecanoyl-2-(5Z,8Z,11Z,14Z-eicosatetraenoyl)-sn-glycero-3-phosphoethanolamine + H2O = 1-hexadecanoyl-sn-glycero-3-phosphoethanolamine + (5Z,8Z,11Z,14Z)-eicosatetraenoate + H(+). The enzyme catalyses 1-octadecanoyl-2-(5Z,8Z,11Z,14Z-eicosatetraenoyl)-sn-glycero-3-phospho-(1D-myo-inositol) + H2O = 1-octadecanoyl-sn-glycero-3-phospho-(1D-myo-inositol) + (5Z,8Z,11Z,14Z)-eicosatetraenoate + H(+). It carries out the reaction 1-hexadecanoyl-2-(9Z-octadecenoyl)-sn-glycero-3-phosphoglycerol + H2O = 1-hexadecanoyl-sn-glycero-3-phosphoglycerol + (9Z)-octadecenoate + H(+). The catalysed reaction is N-hexadecanoyl-1,2-di-(9Z-octadecenoyl)-sn-glycero-3-phosphoethanolamine + H2O = N-hexadecanoyl-1-(9Z-octadecenoyl)-sn-glycero-3-phosphoethanolamine + (9Z)-octadecenoate + H(+). It catalyses the reaction 1'-[1,2-di-(9Z-octadecenoyl)-sn-glycero-3-phospho]-3'-[1-(9Z-octadecenoyl)-sn-glycero-3-phospho]-glycerol + H2O = 1',3'-bis-[1-(9Z-octadecenoyl)-sn-glycero-3-phospho]-glycerol + (9Z)-octadecenoate + H(+). The enzyme catalyses 1',3'-bis[1,2-di-(9Z-octadecenoyl)-sn-glycero-3-phospho]-glycerol + H2O = 1'-[1,2-di-(9Z-octadecenoyl)-sn-glycero-3-phospho]-3'-[1-(9Z-octadecenoyl)-sn-glycero-3-phospho]-glycerol + (9Z)-octadecenoate + H(+). It participates in lipid metabolism; phospholipid metabolism. It functions in the pathway lipid metabolism; leukotriene B4 biosynthesis. Its pathway is lipid metabolism; leukotriene C4 biosynthesis. Functionally, secretory calcium-dependent phospholipase A2 that primarily targets extracellular phospholipids. Hydrolyzes the ester bond of the fatty acyl group attached at sn-2 position of phospholipids (phospholipase A2 activity), preferentially releasing fatty acyl groups with a low degree of unsaturation such as oleoyl (C18:1) and linoleoyl (C18:2) groups. Hydrolyzes low-density lipoprotein (LDL) phospholipids releasing unsaturated fatty acids that drive macrophage polarization toward an M2 phenotype. May act in an autocrine and paracrine manner. Contributes to lipid remodeling of cellular membranes at different subcellular locations and generation of lipid mediators involved in pathogen clearance. Cleaves sn-2 fatty acyl chains of cardiolipin, a major component of the inner membrane of mitochondria and bacterial membranes. Promotes phagocytosis of bacteria in macrophages through production of lysophosphatidylethanolamines. Displays bactericidal activity against Gram-positive bacteria by directly hydrolyzing the phospholipids of the bacterial membrane. Promotes phagocytosis and killing of ingested fungi likely through controlling phagosome-lysosome fusion and phagosome maturation. Plays a role in biosynthesis of cysteinyl leukotrienes (CysLTs) in myeloid cells. In eosinophils, triggers perinuclear arachidonate release and LTC4 synthesis in a PLA2G4A-independent way. In neutrophils, amplifies CysLTs biosynthesis initiated by PLA2G4A. Promotes immune complex clearance in macrophages via stimulating synthesis of CysLTs, which act through CYSLTR1 to trigger phagocytosis. May regulate antigen processing in antigen-presenting cells. In pulmonary macrophages regulates IL33 production required for activation of group 2 innate lymphoid cells. May play a role in the biosynthesis of N-acyl ethanolamines that regulate energy metabolism. Hydrolyzes N-acyl phosphatidylethanolamines to N-acyl lysophosphatidylethanolamines, which are further cleaved by a lysophospholipase D to release N-acyl ethanolamines. In Mus musculus (Mouse), this protein is Phospholipase A2 group V (Pla2g5).